Here is a 297-residue protein sequence, read N- to C-terminus: Mycothiol acetyltransferase (297 aa).

2 consecutive N-acetyltransferase domains span residues 7-156 (VFSD…VTIR) and 153-297 (VTIR…PPPH). Glu38 contributes to the 1D-myo-inositol 2-(L-cysteinylamino)-2-deoxy-alpha-D-glucopyranoside binding site. 79–81 (VVV) contacts acetyl-CoA. Glu180, Lys219, and Glu227 together coordinate 1D-myo-inositol 2-(L-cysteinylamino)-2-deoxy-alpha-D-glucopyranoside. Residues 231–233 (VGV) and 238–244 (QGLGLGR) each bind acetyl-CoA. Tyr265 is a binding site for 1D-myo-inositol 2-(L-cysteinylamino)-2-deoxy-alpha-D-glucopyranoside. 270-275 (NRPALR) contacts acetyl-CoA.

The protein belongs to the acetyltransferase family. MshD subfamily. As to quaternary structure, monomer.

The catalysed reaction is 1D-myo-inositol 2-(L-cysteinylamino)-2-deoxy-alpha-D-glucopyranoside + acetyl-CoA = mycothiol + CoA + H(+). In terms of biological role, catalyzes the transfer of acetyl from acetyl-CoA to desacetylmycothiol (Cys-GlcN-Ins) to form mycothiol. This Thermomonospora curvata (strain ATCC 19995 / DSM 43183 / JCM 3096 / KCTC 9072 / NBRC 15933 / NCIMB 10081 / Henssen B9) protein is Mycothiol acetyltransferase.